Consider the following 461-residue polypeptide: Cysteine--tRNA ligase (461 aa).

Cys28 is a binding site for Zn(2+). Positions 30–40 match the 'HIGH' region motif; that stretch reads ITVYDLCHIGH. Zn(2+)-binding residues include Cys209, His234, and Glu238. The 'KMSKS' region signature appears at 266-270; it reads KMSKS. ATP is bound at residue Lys269.

This sequence belongs to the class-I aminoacyl-tRNA synthetase family. Monomer. The cofactor is Zn(2+).

Its subcellular location is the cytoplasm. It carries out the reaction tRNA(Cys) + L-cysteine + ATP = L-cysteinyl-tRNA(Cys) + AMP + diphosphate. The protein is Cysteine--tRNA ligase of Salmonella dublin (strain CT_02021853).